The primary structure comprises 187 residues: UPF0301 protein KPN78578_33170 (187 aa).

Belongs to the UPF0301 (AlgH) family.

This is UPF0301 protein KPN78578_33170 from Klebsiella pneumoniae subsp. pneumoniae (strain ATCC 700721 / MGH 78578).